Reading from the N-terminus, the 461-residue chain is Aspartic proteinase NANA, chloroplast (461 aa).

Asparagine 86 is a glycosylation site (N-linked (GlcNAc...) asparagine). The 351-residue stretch at 106 to 456 folds into the Peptidase A1 domain; the sequence is YFTEIRVGTP…DLMASTLSFA (351 aa). The active site involves aspartate 124. N-linked (GlcNAc...) asparagine glycosylation is present at asparagine 274. The active site involves aspartate 338. Asparagine 386 is a glycosylation site (N-linked (GlcNAc...) asparagine).

The protein belongs to the peptidase A1 family.

It is found in the plastid. The protein resides in the chloroplast. With respect to regulation, repressed by pepstatin A. Its function is as follows. Aspartic proteinase that can use azocasein as substrate and regulates endogenous sugar levels (e.g. sucrose, glucose and fructose) by modulating starch accumulation and remobilization. Influences general morphology and development. The polypeptide is Aspartic proteinase NANA, chloroplast (Arabidopsis thaliana (Mouse-ear cress)).